A 502-amino-acid chain; its full sequence is Lysine--tRNA ligase (502 aa).

Residues 1 to 22 (MSDHEQAQAQSQDENQIMAERR) are disordered. Residues glutamate 413 and glutamate 420 each coordinate Mg(2+).

It belongs to the class-II aminoacyl-tRNA synthetase family. Homodimer. Mg(2+) is required as a cofactor.

Its subcellular location is the cytoplasm. It carries out the reaction tRNA(Lys) + L-lysine + ATP = L-lysyl-tRNA(Lys) + AMP + diphosphate. The protein is Lysine--tRNA ligase of Chromobacterium violaceum (strain ATCC 12472 / DSM 30191 / JCM 1249 / CCUG 213 / NBRC 12614 / NCIMB 9131 / NCTC 9757 / MK).